Consider the following 241-residue polypeptide: uncharacterized protein (241 aa).

The HTH cro/C1-type domain occupies 32–86 (LKKWRNLFNIQQIELAKYLNVSPSVISDYEVGRRKNPGVNIIKKYVLALIEIDKE). Positions 43–62 (QIELAKYLNVSPSVISDYEV) form a DNA-binding region, H-T-H motif.

This is an uncharacterized protein from Methanocaldococcus jannaschii (strain ATCC 43067 / DSM 2661 / JAL-1 / JCM 10045 / NBRC 100440) (Methanococcus jannaschii).